Here is a 199-residue protein sequence, read N- to C-terminus: ATP-dependent Clp protease proteolytic subunit (199 aa).

Residue Ser102 is the Nucleophile of the active site. The active site involves His127.

Belongs to the peptidase S14 family. In terms of assembly, component of the chloroplastic Clp protease core complex.

It is found in the plastid. It localises to the chloroplast stroma. It carries out the reaction Hydrolysis of proteins to small peptides in the presence of ATP and magnesium. alpha-casein is the usual test substrate. In the absence of ATP, only oligopeptides shorter than five residues are hydrolyzed (such as succinyl-Leu-Tyr-|-NHMec, and Leu-Tyr-Leu-|-Tyr-Trp, in which cleavage of the -Tyr-|-Leu- and -Tyr-|-Trp bonds also occurs).. Functionally, cleaves peptides in various proteins in a process that requires ATP hydrolysis. Has a chymotrypsin-like activity. Plays a major role in the degradation of misfolded proteins. This Physcomitrium patens (Spreading-leaved earth moss) protein is ATP-dependent Clp protease proteolytic subunit.